The sequence spans 543 residues: MTKSNGEEPRMGGRMERLQQGVRKRTLLAKKKVQSLTKEDVKSYLFRNAFVLLTVTAVIVGTILGFALRPYKMSYREVKYFSFPGELLMRMLQMLVLPLIISSLVTGMAALDSKASGKMGMRAVVYYMTTTIIAVVIGIIIVIIIHPGKGTKENMYREGKIVQVTAADAFLDLIRNMFPPNLVEACFKQFKTSYEKRSFKVPIQSNETLLGAVINNVSEAMETLTRIREEMVPVPGSVNGVNALGLVVFSMCFGFVIGNMKEQGQALREFFDSLNEAIMRLVAVIMWYAPLGILFLIAGKIVEMEDMGVIGGQLAMYTVTVIVGLLIHAVIVLPLLYFLVTRKNPWVFIGGLLQALITALGTSSSSATLPITFKCLEENNGVDKRITRFVLPVGATINMDGTALYEALAAIFIAQVNNFDLNFGQIITISITATAASIGAAGIPQAGLVTMVIVLTSVGLPTDDITLIIAVDWFLDRLRTTTNVLGDSLGAGIVEHLSRHELKNRDVEMGNSVIEENEMKKPYQLIAQDNEPEKPVADSETKM.

The Cytoplasmic segment spans residues 1–47; sequence MTKSNGEEPRMGGRMERLQQGVRKRTLLAKKKVQSLTKEDVKSYLFR. A helical transmembrane segment spans residues 48–68; the sequence is NAFVLLTVTAVIVGTILGFAL. Over 69 to 86 the chain is Extracellular; the sequence is RPYKMSYREVKYFSFPGE. A helical membrane pass occupies residues 87-108; that stretch reads LLMRMLQMLVLPLIISSLVTGM. At 109-122 the chain is on the cytoplasmic side; it reads AALDSKASGKMGMR. The helical transmembrane segment at 123–145 threads the bilayer; the sequence is AVVYYMTTTIIAVVIGIIIVIII. Topologically, residues 146-236 are extracellular; the sequence is HPGKGTKENM…IREEMVPVPG (91 aa). Residues asparagine 206 and asparagine 216 are each glycosylated (N-linked (GlcNAc...) asparagine). A helical membrane pass occupies residues 237–260; sequence SVNGVNALGLVVFSMCFGFVIGNM. The Cytoplasmic portion of the chain corresponds to 261–269; that stretch reads KEQGQALRE. A helical transmembrane segment spans residues 270–297; sequence FFDSLNEAIMRLVAVIMWYAPLGILFLI. The Extracellular segment spans residues 298–318; it reads AGKIVEMEDMGVIGGQLAMYT. The helical transmembrane segment at 319 to 340 threads the bilayer; sequence VTVIVGLLIHAVIVLPLLYFLV. Topologically, residues 341–345 are cytoplasmic; that stretch reads TRKNP. Positions 346 to 376 form an intramembrane region, discontinuously helical; the sequence is WVFIGGLLQALITALGTSSSSATLPITFKCL. 363-365 lines the L-aspartate pocket; the sequence is SSS. Over 377 to 385 the chain is Cytoplasmic; that stretch reads EENNGVDKR. The helical transmembrane segment at 386–412 threads the bilayer; it reads ITRFVLPVGATINMDGTALYEALAAIF. Positions 394, 396, and 398 each coordinate Na(+). Threonine 402 provides a ligand contact to L-aspartate. Residues 413-425 are Extracellular-facing; it reads IAQVNNFDLNFGQ. Residues 426–459 constitute an intramembrane region (discontinuously helical); sequence IITISITATAASIGAAGIPQAGLVTMVIVLTSVG. 443–447 is a binding site for L-aspartate; sequence IPQAG. Topologically, residues 460–472 are extracellular; that stretch reads LPTDDITLIIAVD. The helical transmembrane segment at 473-494 threads the bilayer; it reads WFLDRLRTTTNVLGDSLGAGIV. L-aspartate is bound by residues aspartate 476 and asparagine 483. Na(+) contacts are provided by asparagine 483 and aspartate 487. The Cytoplasmic segment spans residues 495-543; that stretch reads EHLSRHELKNRDVEMGNSVIEENEMKKPYQLIAQDNEPEKPVADSETKM. At serine 512 the chain carries Phosphoserine. Residues 522–543 form a disordered region; the sequence is PYQLIAQDNEPEKPVADSETKM. Residues 531-543 are compositionally biased toward basic and acidic residues; sequence EPEKPVADSETKM.

Belongs to the dicarboxylate/amino acid:cation symporter (DAACS) (TC 2.A.23) family. SLC1A3 subfamily. Homotrimer. In terms of processing, glycosylated. In terms of tissue distribution, detected in brain, in Bergmann glia arborising into the molecular layer of the cerebellum (at protein level). Localized in brain and is highly enriched in the Purkinje cell layer in cerebellum. Intermediate level in lung, low level in spleen, skeletal muscle and testis.

Its subcellular location is the cell membrane. The enzyme catalyses K(+)(in) + L-glutamate(out) + 3 Na(+)(out) + H(+)(out) = K(+)(out) + L-glutamate(in) + 3 Na(+)(in) + H(+)(in). It carries out the reaction K(+)(in) + L-aspartate(out) + 3 Na(+)(out) + H(+)(out) = K(+)(out) + L-aspartate(in) + 3 Na(+)(in) + H(+)(in). The catalysed reaction is D-aspartate(out) + K(+)(in) + 3 Na(+)(out) + H(+)(out) = D-aspartate(in) + K(+)(out) + 3 Na(+)(in) + H(+)(in). Its function is as follows. Sodium-dependent, high-affinity amino acid transporter that mediates the uptake of L-glutamate and also L-aspartate and D-aspartate. Functions as a symporter that transports one amino acid molecule together with two or three Na(+) ions and one proton, in parallel with the counter-transport of one K(+) ion. Plays a redundant role in the rapid removal of released glutamate from the synaptic cleft, which is essential for terminating the postsynaptic action of glutamate. This Mus musculus (Mouse) protein is Excitatory amino acid transporter 1 (Slc1a3).